The primary structure comprises 858 residues: DNA mismatch repair protein MutS (858 aa).

Position 609-616 (609-616 (GPNMSGKS)) interacts with ATP.

This sequence belongs to the DNA mismatch repair MutS family.

This protein is involved in the repair of mismatches in DNA. It is possible that it carries out the mismatch recognition step. This protein has a weak ATPase activity. This Enterococcus faecalis (strain ATCC 700802 / V583) protein is DNA mismatch repair protein MutS.